A 465-amino-acid polypeptide reads, in one-letter code: Adenosylhomocysteinase (465 aa).

Substrate contacts are provided by threonine 56, aspartate 131, and glutamate 191. 192–194 (TTT) is a binding site for NAD(+). Residues lysine 221 and aspartate 225 each contribute to the substrate site. Residues asparagine 226, 255–260 (GYGDVG), glutamate 278, asparagine 313, 334–336 (IGH), and asparagine 379 contribute to the NAD(+) site.

The protein belongs to the adenosylhomocysteinase family. The cofactor is NAD(+).

The protein localises to the cytoplasm. The enzyme catalyses S-adenosyl-L-homocysteine + H2O = L-homocysteine + adenosine. It participates in amino-acid biosynthesis; L-homocysteine biosynthesis; L-homocysteine from S-adenosyl-L-homocysteine: step 1/1. Its function is as follows. May play a key role in the regulation of the intracellular concentration of adenosylhomocysteine. This chain is Adenosylhomocysteinase, found in Chelativorans sp. (strain BNC1).